The chain runs to 225 residues: Probable CDP-diacylglycerol--inositol 3-phosphatidyltransferase 2 (225 aa).

A run of 2 helical transmembrane segments spans residues 6-26 and 29-49; these read PATLSVYLYIPNIVGYMRVLL and IAFSVCFSNKTLFSLLYFFSF. The Mg(2+) site is built by Asp52 and Asp55. Residues Gly56, Arg60, and Ser66 each coordinate a CDP-1,2-diacyl-sn-glycerol. Positions 73 and 77 each coordinate Mg(2+). Catalysis depends on Asp77, which acts as the Proton acceptor. The next 3 helical transmembrane spans lie at 84–104, 143–163, and 184–204; these read LLVILSQIYRPSLVFLSLLAL, MFMGYCCVSCEVLYIILLLIA, and LSLLLALSIFGWSIKQIINVI.

This sequence belongs to the CDP-alcohol phosphatidyltransferase class-I family. The cofactor is Mg(2+). It depends on Mn(2+) as a cofactor.

It localises to the membrane. The enzyme catalyses a CDP-1,2-diacyl-sn-glycerol + myo-inositol = a 1,2-diacyl-sn-glycero-3-phospho-(1D-myo-inositol) + CMP + H(+). In terms of biological role, catalyzes the biosynthesis of phosphatidylinositol (PtdIns) as well as PtdIns:inositol exchange reaction. May thus act to reduce an excessive cellular PtdIns content. The exchange activity is due to the reverse reaction of PtdIns synthase and is dependent on CMP, which is tightly bound to the enzyme. This is Probable CDP-diacylglycerol--inositol 3-phosphatidyltransferase 2 (PIS2) from Arabidopsis thaliana (Mouse-ear cress).